The chain runs to 443 residues: Spermidine hydroxycinnamoyltransferase 1 (443 aa).

Residues His-167 and Asp-390 each act as proton acceptor in the active site.

It belongs to the plant acyltransferase family.

Functionally, hydroxycinnamoyl transferase that catalyzes the transfer of an acyl from p-coumaryol-CoA to spermidine, to produce coumaroyl spermidine. Can use feruloyl-CoA as acyl donor. Contributes to the natural variation of spermidine-based phenolamides in rice cultivars. The polypeptide is Spermidine hydroxycinnamoyltransferase 1 (Oryza sativa subsp. japonica (Rice)).